We begin with the raw amino-acid sequence, 208 residues long: Protein-L-isoaspartate O-methyltransferase (208 aa).

The active site involves Ser-59.

This sequence belongs to the methyltransferase superfamily. L-isoaspartyl/D-aspartyl protein methyltransferase family.

The protein localises to the cytoplasm. The catalysed reaction is [protein]-L-isoaspartate + S-adenosyl-L-methionine = [protein]-L-isoaspartate alpha-methyl ester + S-adenosyl-L-homocysteine. In terms of biological role, catalyzes the methyl esterification of L-isoaspartyl residues in peptides and proteins that result from spontaneous decomposition of normal L-aspartyl and L-asparaginyl residues. It plays a role in the repair and/or degradation of damaged proteins. The polypeptide is Protein-L-isoaspartate O-methyltransferase (Citrobacter koseri (strain ATCC BAA-895 / CDC 4225-83 / SGSC4696)).